Here is a 916-residue protein sequence, read N- to C-terminus: Isoleucine--tRNA ligase (916 aa).

The 'HIGH' region signature appears at 57 to 67 (PYANGNLHMGH). Glu-554 contacts L-isoleucyl-5'-AMP. The 'KMSKS' region motif lies at 595 to 599 (KMSKS). Lys-598 is a binding site for ATP. Residues Cys-885, Cys-888, Cys-905, and Cys-908 each contribute to the Zn(2+) site.

It belongs to the class-I aminoacyl-tRNA synthetase family. IleS type 1 subfamily. In terms of assembly, monomer. Zn(2+) is required as a cofactor.

The protein localises to the cytoplasm. It carries out the reaction tRNA(Ile) + L-isoleucine + ATP = L-isoleucyl-tRNA(Ile) + AMP + diphosphate. Its function is as follows. Catalyzes the attachment of isoleucine to tRNA(Ile). As IleRS can inadvertently accommodate and process structurally similar amino acids such as valine, to avoid such errors it has two additional distinct tRNA(Ile)-dependent editing activities. One activity is designated as 'pretransfer' editing and involves the hydrolysis of activated Val-AMP. The other activity is designated 'posttransfer' editing and involves deacylation of mischarged Val-tRNA(Ile). The chain is Isoleucine--tRNA ligase (ileS) from Staphylococcus epidermidis (strain ATCC 35984 / DSM 28319 / BCRC 17069 / CCUG 31568 / BM 3577 / RP62A).